The chain runs to 352 residues: Ion-translocating oxidoreductase complex subunit D (352 aa).

The next 5 helical transmembrane spans lie at 20-40, 42-62, 78-109, 123-143, and 148-168; these read IMLL…WFFG, GTLV…ALVL, ALLT…VIIA, PAMI…TSWL, and IAVN…GHTA. FMN phosphoryl threonine is present on Thr-187. 5 consecutive transmembrane segments (helical) span residues 214-234, 242-262, 267-287, 301-321, and 322-342; these read ILAG…GVWL, WHIP…GWLF, LAAP…FFIL, LIFG…GGYP, and DGVA…DYYT.

The protein belongs to the NqrB/RnfD family. As to quaternary structure, the complex is composed of six subunits: RsxA, RsxB, RsxC, RsxD, RsxE and RsxG. It depends on FMN as a cofactor.

It localises to the cell inner membrane. In terms of biological role, part of a membrane-bound complex that couples electron transfer with translocation of ions across the membrane. Required to maintain the reduced state of SoxR. This is Ion-translocating oxidoreductase complex subunit D from Shigella dysenteriae serotype 1 (strain Sd197).